A 337-amino-acid polypeptide reads, in one-letter code: DnaJ homolog dnj-2 (337 aa).

The chain crosses the membrane as a helical span at residues 4–24 (AIAAPILFLLVSFFVQECESV). The 70-residue stretch at 36–105 (NCYDVLEVNR…EAKTNYDYYL (70 aa)) folds into the J domain. 2 helical membrane passes run 127 to 147 (VDLR…QFLS) and 222 to 242 (LAWH…WTAL). Residues 293 to 323 (LKRNCATWKAERDAAEQEKMAQSGRYKRYKR) are a coiled coil.

It belongs to the DNAJC25 family.

Its subcellular location is the membrane. The sequence is that of DnaJ homolog dnj-2 (dnj-2) from Caenorhabditis elegans.